A 104-amino-acid polypeptide reads, in one-letter code: METIAFRMRLHPGKQDEYRRRHDAIWPELADALRAAGISDYWIFLDDDTHHLFAVLRRPADHRIAQLAETDVMRRWWAYMADLMATGPDGRPVEKALEPMFHLE.

Tyr-18 contacts substrate. Catalysis depends on His-22, which acts as the Proton donor. Substrate contacts are provided by residues Tyr-41 and 76–77 (WW).

The protein belongs to the rhamnose mutarotase family. As to quaternary structure, homodimer.

It is found in the cytoplasm. The catalysed reaction is alpha-L-rhamnose = beta-L-rhamnose. Its pathway is carbohydrate metabolism; L-rhamnose metabolism. Involved in the anomeric conversion of L-rhamnose. The polypeptide is L-rhamnose mutarotase (Burkholderia orbicola (strain MC0-3)).